We begin with the raw amino-acid sequence, 311 residues long: Pyrimidine-specific ribonucleoside hydrolase RihA (311 aa).

The active site involves His240.

This sequence belongs to the IUNH family. RihA subfamily.

Functionally, hydrolyzes with equal efficiency cytidine or uridine to ribose and cytosine or uracil, respectively. This Escherichia coli O45:K1 (strain S88 / ExPEC) protein is Pyrimidine-specific ribonucleoside hydrolase RihA.